A 1014-amino-acid polypeptide reads, in one-letter code: Klotho (1014 aa).

A signal peptide spans 1–34 (MLARAPPRRPPRLVLLRLLLLHLLLLALRARCLS). Residues 35-982 (AEPGQGAQTW…TECGFFQTRK (948 aa)) are Extracellular-facing. Glycosyl hydrolase-1 regions lie at residues 59-508 (LHDT…DNGF) and 517-955 (LEGT…SNGF). Residues Asn-161, Asn-285, Asn-346, Asn-609, Asn-614, and Asn-696 are each glycosylated (N-linked (GlcNAc...) asparagine). Residues 983–1003 (SLLVFISFLVFTFIISLALIF) form a helical membrane-spanning segment. Residues 1004 to 1014 (HYSKKGQRSYK) lie on the Cytoplasmic side of the membrane.

Belongs to the glycosyl hydrolase 1 family. Klotho subfamily. In terms of assembly, homodimer. Interacts with FGF23 and FGFR1. In terms of processing, N-glycosylated. As to expression, membrane-bound protein is present in distal renal tubules, inner ear, ependymal cells of brain choroid plexus, elongating spermatids and mature oocytes (at protein level). Soluble peptide is present in serum (100 pM) and cerebrospinal fluid. Expressed strongly in kidney, moderately in brain choroid plexus, and at low levels in pituitary, placenta, skeletal muscle, urinary bladder, aorta, pancreas, testis, ovary, colon, thyroid gland and adipocytes.

It localises to the cell membrane. The protein localises to the apical cell membrane. The protein resides in the secreted. The enzyme catalyses a beta-D-glucuronoside + H2O = D-glucuronate + an alcohol. Its activity is regulated as follows. Inhibited by D-saccharic acid 1,4-lactone and taurocholic acid. Its function is as follows. May have weak glycosidase activity towards glucuronylated steroids. However, it lacks essential active site Glu residues at positions 241 and 874, suggesting it may be inactive as a glycosidase in vivo. May be involved in the regulation of calcium and phosphorus homeostasis by inhibiting the synthesis of active vitamin D. Essential factor for the specific interaction between FGF23 and FGFR1. The Klotho peptide generated by cleavage of the membrane-bound isoform may be an anti-aging circulating hormone which would extend life span by inhibiting insulin/IGF1 signaling. The chain is Klotho (Kl) from Mus musculus (Mouse).